We begin with the raw amino-acid sequence, 360 residues long: uncharacterized protein (360 aa).

This is an uncharacterized protein from Escherichia coli (strain UTI89 / UPEC).